The following is a 540-amino-acid chain: NXPE family member 1 (540 aa).

A signal peptide spans 1-22 (MLHKYLKLICLLAAICVLCIIS). 6 N-linked (GlcNAc...) asparagine glycosylation sites follow: Asn24, Asn42, Asn87, Asn155, Asn205, and Asn291.

The protein belongs to the NXPE family. As to expression, intestine, and to a lesser extent in kidney.

It localises to the secreted. The sequence is that of NXPE family member 1 (NXPE1) from Oryctolagus cuniculus (Rabbit).